We begin with the raw amino-acid sequence, 777 residues long: Degenerin unc-8 (777 aa).

Residues 1–128 (MSPLLTWNLI…VATSSFFGRY (128 aa)) are Cytoplasmic-facing. A helical transmembrane segment spans residues 129–149 (VWAALFMCMLMAFLLQTYWTM). Residues 150 to 689 (SEYLQYRTII…KETAGYTLVN (540 aa)) lie on the Extracellular side of the membrane. 7 N-linked (GlcNAc...) asparagine glycosylation sites follow: Asn274, Asn319, Asn357, Asn411, Asn453, Asn533, and Asn597. Residues 690 to 710 (LFSDFGGNIGLWIGFSVITFA) traverse the membrane as a helical segment. Residues 711–777 (EFAELFCEIC…NESTKELMSK (67 aa)) lie on the Cytoplasmic side of the membrane. The tract at residues 752–777 (QRSPKKSQPGEDEVSTNESTKELMSK) is disordered.

The protein belongs to the amiloride-sensitive sodium channel (TC 1.A.6) family.

Its subcellular location is the membrane. In terms of biological role, sodium permeable non-voltage-sensitive ion channel. Involved in the activity-dependent removal of selected presynaptic proteins, such as synaptobrevin snb-1, and Ras-related rab-3, in the remodeling of GABAergic motor neurons. This Caenorhabditis elegans protein is Degenerin unc-8.